Consider the following 349-residue polypeptide: Isopentenyl-diphosphate delta-isomerase (349 aa).

6 to 7 contributes to the substrate binding site; sequence RK. FMN-binding positions include 62–64, Ser-93, and Asn-122; that span reads AMT. Gln-152 contributes to the substrate binding site. Glu-153 contacts Mg(2+). FMN-binding positions include Lys-184, Thr-214, 258-259, and 280-281; these read GG and AG.

It belongs to the IPP isomerase type 2 family. As to quaternary structure, homooctamer. Dimer of tetramers. FMN serves as cofactor. Requires NADPH as cofactor. The cofactor is Mg(2+).

The protein resides in the cytoplasm. It catalyses the reaction isopentenyl diphosphate = dimethylallyl diphosphate. Functionally, involved in the biosynthesis of isoprenoids. Catalyzes the 1,3-allylic rearrangement of the homoallylic substrate isopentenyl (IPP) to its allylic isomer, dimethylallyl diphosphate (DMAPP). In Bacillus cereus (strain AH820), this protein is Isopentenyl-diphosphate delta-isomerase.